A 287-amino-acid polypeptide reads, in one-letter code: ATP synthase gamma chain (287 aa).

This sequence belongs to the ATPase gamma chain family. F-type ATPases have 2 components, CF(1) - the catalytic core - and CF(0) - the membrane proton channel. CF(1) has five subunits: alpha(3), beta(3), gamma(1), delta(1), epsilon(1). CF(0) has three main subunits: a, b and c.

Its subcellular location is the cell membrane. Produces ATP from ADP in the presence of a proton gradient across the membrane. The gamma chain is believed to be important in regulating ATPase activity and the flow of protons through the CF(0) complex. In Bacillus velezensis (strain DSM 23117 / BGSC 10A6 / LMG 26770 / FZB42) (Bacillus amyloliquefaciens subsp. plantarum), this protein is ATP synthase gamma chain.